The chain runs to 124 residues: UPF0102 protein HEAR0176 (124 aa).

This sequence belongs to the UPF0102 family.

This chain is UPF0102 protein HEAR0176, found in Herminiimonas arsenicoxydans.